The chain runs to 480 residues: F-box/LRR-repeat protein 14 (480 aa).

Positions 11-58 constitute an F-box domain; that stretch reads DRQMDELPDHLVWDILSKLHTTDDRNSLSLSCKRFFSLDNEQRYSLRI. LRR repeat units lie at residues 61–86, 94–119, 120–144, 145–170, 171–196, 197–222, 229–257, 258–283, 284–309, 322–347, 355–379, 380–404, 405–429, 430–454, and 455–480; these read GLVP…EIIY, GKQV…TLSF, CTFI…KLNF, APRI…HLIR, CLNV…CIKN, CRAI…QFEV, MKVY…SLGN, CIIA…HLDM, CTGV…SLRV, TLRL…KISF, LFSF…SLDH, VCVF…ELVH, CQEV…KLSK, CLGV…VVED, and CPQV…SWMY.

The protein is F-box/LRR-repeat protein 14 (FBL14) of Arabidopsis thaliana (Mouse-ear cress).